The following is a 259-amino-acid chain: 4-hydroxy-tetrahydrodipicolinate reductase (259 aa).

NAD(+)-binding positions include 8-13, 93-95, and 119-122; these read GFKGRM, GTT, and APNF. The active-site Proton donor/acceptor is His-149. Residue His-150 participates in (S)-2,3,4,5-tetrahydrodipicolinate binding. Residue Lys-153 is the Proton donor of the active site. 159-160 is a binding site for (S)-2,3,4,5-tetrahydrodipicolinate; the sequence is GT.

This sequence belongs to the DapB family.

The protein localises to the cytoplasm. It catalyses the reaction (S)-2,3,4,5-tetrahydrodipicolinate + NAD(+) + H2O = (2S,4S)-4-hydroxy-2,3,4,5-tetrahydrodipicolinate + NADH + H(+). It carries out the reaction (S)-2,3,4,5-tetrahydrodipicolinate + NADP(+) + H2O = (2S,4S)-4-hydroxy-2,3,4,5-tetrahydrodipicolinate + NADPH + H(+). Its pathway is amino-acid biosynthesis; L-lysine biosynthesis via DAP pathway; (S)-tetrahydrodipicolinate from L-aspartate: step 4/4. In terms of biological role, catalyzes the conversion of 4-hydroxy-tetrahydrodipicolinate (HTPA) to tetrahydrodipicolinate. The chain is 4-hydroxy-tetrahydrodipicolinate reductase from Enterococcus faecalis (strain ATCC 700802 / V583).